A 273-amino-acid chain; its full sequence is Transposable element Tc1 transposase (273 aa).

The protein belongs to the transposase 5 family.

The protein resides in the nucleus. Functionally, probably essential for transposable element Tc1 transposition. The insertion of Tc1 is the main cause of spontaneous mutations. It is an endonuclease which can produce a single strand nick at the 5'-end of the transposon. This chain is Transposable element Tc1 transposase (tc1a), found in Caenorhabditis elegans.